The following is a 112-amino-acid chain: Nucleoid-associated protein FTN_1196 (112 aa).

A disordered region spans residues 1 to 27 (MNFDMSKLMQQAQKMQEQMKKAQQERE). The span at 17 to 27 (EQMKKAQQERE) shows a compositional bias: basic and acidic residues.

The protein belongs to the YbaB/EbfC family. Homodimer.

The protein localises to the cytoplasm. It localises to the nucleoid. In terms of biological role, binds to DNA and alters its conformation. May be involved in regulation of gene expression, nucleoid organization and DNA protection. The sequence is that of Nucleoid-associated protein FTN_1196 from Francisella tularensis subsp. novicida (strain U112).